The primary structure comprises 284 residues: Tropomyosin alpha-1 chain (284 aa).

The segment at methionine 1–lysine 37 is disordered. Positions methionine 1–isoleucine 284 form a coiled coil. Residues lysine 12 to lysine 37 show a composition bias toward basic and acidic residues.

The protein belongs to the tropomyosin family. Homodimer. Heterodimer of an alpha (TPM1, TPM3 or TPM4) and a beta (TPM2) chain.

It localises to the cytoplasm. The protein localises to the cytoskeleton. Functionally, binds to actin filaments in muscle and non-muscle cells. Plays a central role, in association with the troponin complex, in the calcium dependent regulation of vertebrate striated muscle contraction. Smooth muscle contraction is regulated by interaction with caldesmon. In non-muscle cells is implicated in stabilizing cytoskeleton actin filaments. The sequence is that of Tropomyosin alpha-1 chain (tpma) from Danio rerio (Zebrafish).